The primary structure comprises 311 residues: tRNA dimethylallyltransferase (311 aa).

12–19 is a binding site for ATP; it reads GPTASGKT. 14–19 serves as a coordination point for substrate; that stretch reads TASGKT. Interaction with substrate tRNA stretches follow at residues 37-40, 161-165, and 241-246; these read DSAL, QRINR, and RCVGYR.

The protein belongs to the IPP transferase family. As to quaternary structure, monomer. Mg(2+) serves as cofactor.

The enzyme catalyses adenosine(37) in tRNA + dimethylallyl diphosphate = N(6)-dimethylallyladenosine(37) in tRNA + diphosphate. Functionally, catalyzes the transfer of a dimethylallyl group onto the adenine at position 37 in tRNAs that read codons beginning with uridine, leading to the formation of N6-(dimethylallyl)adenosine (i(6)A). In Histophilus somni (strain 129Pt) (Haemophilus somnus), this protein is tRNA dimethylallyltransferase.